Here is a 336-residue protein sequence, read N- to C-terminus: NmrA-like family domain-containing oxidoreductase FrzB (336 aa).

K135 is a binding site for NADP(+).

Belongs to the NmrA-type oxidoreductase family.

The enzyme catalyses 4-{[(2S,5S)-5-[(4-hydroxyphenyl)methyl]-2,5-dihydropyrazin-2-yl]methyl}phenol + 2 NADPH + 2 H(+) = (S,S)-2,5-di-(p-hydroxybenzyl)piperazine + 2 NADP(+). The protein operates within secondary metabolite biosynthesis. In terms of biological role, nmrA-like family domain-containing oxidoreductase; part of the gene cluster that mediates the biosynthesis of the alkaloid (-)-FR901483, a potent immunosuppressant that shows efficacy in animal models and a probable inhibitor of purine nucleotide biosynthesis by targeting phosphoribosylpyrophosphate amidotransferase (PPAT). Within the pathway, FrzB catalyzes the reduction of 4-{[(2S,5S)-5-[(4-hydroxyphenyl)methyl]-2,5-dihydropyrazin-2-yl]methyl}phenol to produce the (S,S)-dityrosyl-piperazine intermediate. The biosynthesis of (-)-FR901483 starts with the condensation of two L-tyrosines to yield (S,S)-dityrosyl-piperazine. This process occurs in 3 steps with the non-canonical nonribosomal peptide synthetase FrzA catalyzing the reduction of L-tyrosine into L-tyrosinal, the spontaneous condensation of 2 L-tyrosinal units, and the subsequent reduction by the NmrA-like family domain-containing oxidoreductase FrzB. The cytochrome P450 monooxygenase FrzC then performs coupling between N10 and C1' to morph the piperazine into a 1,4-diazabicyclo[3.2.1]octane spiro-fused to a 2,5-cyclohexadienone. The dienone portion is further reduced to cyclohexanone by the flavin-dependent reductase FrzD. The methyltranserases (MTs) FrzE and FrzF are then involved in the methylation at the C10' amine and the C4 phenolic oxygen, respectively. The order of the two MTs appear to be interchangeable. Cleavage of the C9-N10' bond by the dioxygenase FrzG then leads to formation of a conjugated iminium. In addition to the oxidation of C9, an additional dehydrogenation between C7 and C8 can occur to give a likely shunt product. The next biosynthetic step is the intramolecular aldol condensation catalyzed by the newly identified aldolase FrzH to yield an aza-tricyclic product with the formation of a C9-C3' bond. The short-chain dehydrogenase/reductase FrzI then produces dephospho-(-)-FR901483 that is phosphorylated at C4'-OH into (-)-FR901483 by the phosphotransferase FrzJ. The protein is NmrA-like family domain-containing oxidoreductase FrzB of Cladobotryum sp.